The sequence spans 370 residues: (5-formylfuran-3-yl)methyl phosphate transaminase (370 aa).

Position 222 is an N6-(pyridoxal phosphate)lysine (lysine 222).

Belongs to the class-I pyridoxal-phosphate-dependent aminotransferase family. Homodimer. The cofactor is pyridoxal 5'-phosphate.

The protein resides in the cytoplasm. It catalyses the reaction 4-(hydroxymethyl)-2-furancarboxaldehyde phosphate + L-alanine = [5-(aminomethyl)-3-furyl]methyl phosphate + pyruvate. It functions in the pathway cofactor biosynthesis; methanofuran biosynthesis. In terms of biological role, catalyzes the transamination reaction between 4-(hydroxymethyl)-2-furancarboxaldehyde phosphate (4-HFC-P) and alanine to produce pyruvate and 5-(aminomethyl)-3-furanmethanol phosphate (F1-P), the precursor for the furan moiety in methanofuran. The polypeptide is (5-formylfuran-3-yl)methyl phosphate transaminase (Methanocaldococcus jannaschii (strain ATCC 43067 / DSM 2661 / JAL-1 / JCM 10045 / NBRC 100440) (Methanococcus jannaschii)).